The chain runs to 159 residues: uncharacterized protein (159 aa).

The protein to M.jannaschii MJECL20.

This is an uncharacterized protein from Methanocaldococcus jannaschii (strain ATCC 43067 / DSM 2661 / JAL-1 / JCM 10045 / NBRC 100440) (Methanococcus jannaschii).